A 295-amino-acid chain; its full sequence is uncharacterized protein (295 aa).

The signal sequence occupies residues 1-19; sequence MFRKFLFIPLLIVTSLVKA. The interval 274–295 is disordered; that stretch reads KRNNPPLKNNNAKSKNSYETHK. The segment covering 276-288 has biased composition (low complexity); the sequence is NNPPLKNNNAKSK.

This is an uncharacterized protein from Rickettsia typhi (strain ATCC VR-144 / Wilmington).